A 161-amino-acid polypeptide reads, in one-letter code: MSTTPTLSHLDESGQIRMVDVGHKTDTDRVAIARGSVRMNATAYGLLTQPGQGKGEVLNTARVAAVLAAKRCAELIPLCHSLPLAFVGIDFELDEAAHSVHIRATCRTQYKTGVEMEAMTACSVAALTIYDMCKAADKGIVIEQIRLQYKAGGKSGEWRND.

Substrate is bound by residues 78-80 (LCH) and 116-117 (ME). Asp131 is an active-site residue.

The protein belongs to the MoaC family. In terms of assembly, homohexamer; trimer of dimers.

The enzyme catalyses (8S)-3',8-cyclo-7,8-dihydroguanosine 5'-triphosphate = cyclic pyranopterin phosphate + diphosphate. It functions in the pathway cofactor biosynthesis; molybdopterin biosynthesis. Its function is as follows. Catalyzes the conversion of (8S)-3',8-cyclo-7,8-dihydroguanosine 5'-triphosphate to cyclic pyranopterin monophosphate (cPMP). This Bordetella pertussis (strain Tohama I / ATCC BAA-589 / NCTC 13251) protein is Cyclic pyranopterin monophosphate synthase.